The primary structure comprises 232 residues: Putative quercetin 2,3-dioxygenase PA1210 (232 aa).

Positions 57, 59, 101, and 103 each coordinate a divalent metal cation.

Belongs to the pirin family. A divalent metal cation is required as a cofactor.

The catalysed reaction is quercetin + O2 = 2-(3,4-dihydroxybenzoyloxy)-4,6-dihydroxybenzoate + CO. The protein operates within flavonoid metabolism; quercetin degradation. Its function is as follows. Putative quercetin 2,3-dioxygenase. This Pseudomonas aeruginosa (strain ATCC 15692 / DSM 22644 / CIP 104116 / JCM 14847 / LMG 12228 / 1C / PRS 101 / PAO1) protein is Putative quercetin 2,3-dioxygenase PA1210.